The following is a 449-amino-acid chain: 3-phosphoshikimate 1-carboxyvinyltransferase (449 aa).

The segment at 1–26 (MNHHLPSRPARSRQSQGLKGNLRVPG) is disordered. Residues lysine 28, serine 29, and arginine 33 each contribute to the 3-phosphoshikimate site. A phosphoenolpyruvate-binding site is contributed by lysine 28. Positions 100 and 128 each coordinate phosphoenolpyruvate. 3-phosphoshikimate-binding residues include serine 174, glutamine 176, aspartate 327, and lysine 354. Glutamine 176 serves as a coordination point for phosphoenolpyruvate. Aspartate 327 (proton acceptor) is an active-site residue. Residues arginine 358 and arginine 403 each contribute to the phosphoenolpyruvate site.

It belongs to the EPSP synthase family. In terms of assembly, monomer.

It is found in the cytoplasm. It catalyses the reaction 3-phosphoshikimate + phosphoenolpyruvate = 5-O-(1-carboxyvinyl)-3-phosphoshikimate + phosphate. It functions in the pathway metabolic intermediate biosynthesis; chorismate biosynthesis; chorismate from D-erythrose 4-phosphate and phosphoenolpyruvate: step 6/7. In terms of biological role, catalyzes the transfer of the enolpyruvyl moiety of phosphoenolpyruvate (PEP) to the 5-hydroxyl of shikimate-3-phosphate (S3P) to produce enolpyruvyl shikimate-3-phosphate and inorganic phosphate. This is 3-phosphoshikimate 1-carboxyvinyltransferase from Chelativorans sp. (strain BNC1).